Here is a 248-residue protein sequence, read N- to C-terminus: Phosphate import ATP-binding protein PstB (248 aa).

Residues 1-243 (MAVNDVNVFY…PQHNLTQGYI (243 aa)) enclose the ABC transporter domain. 33-40 (GPSGCGKS) is a binding site for ATP.

This sequence belongs to the ABC transporter superfamily. Phosphate importer (TC 3.A.1.7) family. In terms of assembly, the complex is composed of two ATP-binding proteins (PstB), two transmembrane proteins (PstC and PstA) and a solute-binding protein (PstS).

Its subcellular location is the cell inner membrane. It carries out the reaction phosphate(out) + ATP + H2O = ADP + 2 phosphate(in) + H(+). In terms of biological role, part of the ABC transporter complex PstSACB involved in phosphate import. Responsible for energy coupling to the transport system. This is Phosphate import ATP-binding protein PstB from Rhodospirillum rubrum (strain ATCC 11170 / ATH 1.1.1 / DSM 467 / LMG 4362 / NCIMB 8255 / S1).